Reading from the N-terminus, the 537-residue chain is P2Y purinoceptor 4 (537 aa).

Residues 1-49 (MTEDIMATSYPTFLTTPYLPMKLLMNLTNDTEDICVFDEGFKFLLLPVS) lie on the Extracellular side of the membrane. 2 N-linked (GlcNAc...) asparagine glycosylation sites follow: Asn26 and Asn29. The helical transmembrane segment at 50-70 (YSAVFMVGLPLNIAAMWIFIA) threads the bilayer. The Cytoplasmic segment spans residues 71 to 79 (KMRPWNPTT). The helical transmembrane segment at 80 to 100 (VYMFNLALSDTLYVLSLPTLV) threads the bilayer. Over 101-118 (YYYADKNNWPFGEVLCKL) the chain is Extracellular. An intrachain disulfide couples Cys116 to Cys193. The chain crosses the membrane as a helical span at residues 119–139 (VRFLFYANLYSSILFLTCISV). The Cytoplasmic portion of the chain corresponds to 140–161 (HRYRGVCHPITSLRRMNAKHAY). Residues 162–182 (VICALVWLSVTLCLVPNLIFV) traverse the membrane as a helical segment. Over 183–210 (TVSPKVKNTICHDTTRPEDFARYVEYST) the chain is Extracellular. A helical membrane pass occupies residues 211–231 (AIMCLLFGIPCLIIAGCYGLM). Residues 232 to 254 (TRELMKPIVSGNQQTLPSYKKRS) lie on the Cytoplasmic side of the membrane. The helical transmembrane segment at 255–275 (IKTIIFVMIAFAICFMPFHIT) threads the bilayer. Residues 276–292 (RTLYYYARLLGIKCYAL) are Extracellular-facing. A helical transmembrane segment spans residues 293 to 316 (NVINVTYKVTRPLASANSCIDPIL). Over 317–537 (YFLANDRYRR…EKELQNFPKA (221 aa)) the chain is Cytoplasmic. The disordered stretch occupies residues 401 to 505 (NRRSTIKRNS…GEGTSTWNLL (105 aa)). Composition is skewed to basic and acidic residues over residues 409-423 (NSTD…RHGE) and 431-447 (VVEK…RKTT). The segment covering 448 to 465 (EQSSKTNAEQDELQTQID) has biased composition (polar residues).

The protein belongs to the G-protein coupled receptor 1 family.

It is found in the cell membrane. Receptor for extracellular ATP, UTP, CTP, GTP and ITP. The activity of this receptor is mediated by G proteins which activate a phosphatidylinositol-calcium second messenger system. May play a key role in the early development of neural tissue. The sequence is that of P2Y purinoceptor 4 (p2ry4) from Xenopus laevis (African clawed frog).